Here is a 343-residue protein sequence, read N- to C-terminus: MPESDLEELPGVGPATAEKLRDNGFDAFQSLAVANSAELSNTADIGESTAADVIQAAREAADVGGFETGATVLERREQIGKLTWNIPEVDDLLGGGVETQSITEVYGEFGAGKSQVTHQLAVNVQLPTEYGGLHGRAVFIDSEDTFRPERIDDMVRGLSDETLQAAMEAHEIEGSTDDEDTLTELVDAFLDKIHVAKGFNSNHQMLLAEKAKEIASEHEDGDWPVRMLTVDSLTAHFRAEYVGRGELADRQQKLNKHLHDLEKVGNLYNAAVLVTNQVQSNPDAFFGDPTKPIGGNILGHKSTFRMYLRKSKNDKRIVKLVDAPNLADGEAVMRVQDEGLKPE.

107 to 114 provides a ligand contact to ATP; it reads GEFGAGKS.

Belongs to the eukaryotic RecA-like protein family.

Its function is as follows. Involved in DNA repair and in homologous recombination. Binds and assemble on single-stranded DNA to form a nucleoprotein filament. Hydrolyzes ATP in a ssDNA-dependent manner and promotes DNA strand exchange between homologous DNA molecules. The protein is DNA repair and recombination protein RadA of Halobacterium salinarum (strain ATCC 29341 / DSM 671 / R1).